The chain runs to 432 residues: UDP-N-acetylglucosamine 1-carboxyvinyltransferase (432 aa).

22-23 (KN) lines the phosphoenolpyruvate pocket. Arg96 lines the UDP-N-acetyl-alpha-D-glucosamine pocket. The active-site Proton donor is the Cys120. Position 120 is a 2-(S-cysteinyl)pyruvic acid O-phosphothioketal (Cys120). UDP-N-acetyl-alpha-D-glucosamine contacts are provided by residues 125 to 129 (RPVDL), Asp310, and Ile332.

The protein belongs to the EPSP synthase family. MurA subfamily.

It is found in the cytoplasm. It catalyses the reaction phosphoenolpyruvate + UDP-N-acetyl-alpha-D-glucosamine = UDP-N-acetyl-3-O-(1-carboxyvinyl)-alpha-D-glucosamine + phosphate. Its pathway is cell wall biogenesis; peptidoglycan biosynthesis. Its function is as follows. Cell wall formation. Adds enolpyruvyl to UDP-N-acetylglucosamine. In Caulobacter sp. (strain K31), this protein is UDP-N-acetylglucosamine 1-carboxyvinyltransferase.